Reading from the N-terminus, the 267-residue chain is Hydroxynaphthalene reductase-like protein Arp2 (267 aa).

4 residues coordinate NADP(+): Ile25, Asn45, Asp71, and Asn98. Catalysis depends on proton donor residues Ser147 and Ser148. Residues Tyr162, Lys166, Val195, and Thr197 each coordinate NADP(+). Tyr162 (proton acceptor) is an active-site residue. Lys166 (lowers pKa of active site Tyr) is an active-site residue.

It belongs to the short-chain dehydrogenases/reductases (SDR) family.

Hydroxynaphthalene reductase-like protein; part of the Pks2 gene cluster that mediates the formation of infectious structures (appressoria), enabling these fungi to kill insects faster. The product of the Pks2 gene cluster is different from the one of Pks1 and has still not been identified. The chain is Hydroxynaphthalene reductase-like protein Arp2 from Metarhizium robertsii (strain ARSEF 23 / ATCC MYA-3075) (Metarhizium anisopliae (strain ARSEF 23)).